Here is a 288-residue protein sequence, read N- to C-terminus: Xyloglucan endotransglucosylase protein 8 (288 aa).

Positions 1–25 (MAASPYSIFAVQLLLLASWMLSSSS) are cleaved as a signal peptide. Residues 26–215 (SNFNQDFNIA…WTQAPFTTSY (190 aa)) enclose the GH16 domain. The Nucleophile role is filled by Glu-102. The active-site Proton donor is the Glu-106. Glu-106 provides a ligand contact to xyloglucan. Residue Asn-110 is glycosylated (N-linked (GlcNAc...) asparagine). Residues 119-121 (HTN), 129-131 (ERE), 194-195 (EW), and Gly-199 contribute to the xyloglucan site. Intrachain disulfides connect Cys-224–Cys-233 and Cys-268–Cys-282. Arg-273 is a xyloglucan binding site.

The protein belongs to the glycosyl hydrolase 16 family. XTH group 2 subfamily. In terms of processing, contains at least one intrachain disulfide bond essential for its enzymatic activity. As to expression, highly expressed in mature fruits. Very low expression in leaves, flowers, calyces and stems.

The protein localises to the secreted. The protein resides in the cell wall. It is found in the extracellular space. It localises to the apoplast. It carries out the reaction breaks a beta-(1-&gt;4) bond in the backbone of a xyloglucan and transfers the xyloglucanyl segment on to O-4 of the non-reducing terminal glucose residue of an acceptor, which can be a xyloglucan or an oligosaccharide of xyloglucan.. Catalyzes xyloglucan endotransglycosylation (XET). Cleaves and religates xyloglucan polymers. Does not catalyze xyloglucan endohydrolysis (XEH). Overexpression in Arabidopsis transgenic plants causes accelerated dark-induced leaf senescence and higher lipid peroxidation of the leaf cells. Overexpression in transgenic tomato plants promotes fruit ripening and softening. Probably involved in cell wall restructuring during postharvest fruit softening. The polypeptide is Xyloglucan endotransglucosylase protein 8 (Diospyros kaki (Kaki persimmon)).